We begin with the raw amino-acid sequence, 382 residues long: MPTMGAEMNTRNMRYILLTGLLPMASAFGETALQCAALTDNVTRLACYDRIFAAQLPSSAGQEGQESKAVLNLTETVRSSLDKGEAVIVVEKGGDALPADSAGETADIYTPLSLMYDLDKNDLRGLLGVREHNPMYLMPLWYNNSPNYAPGSPTRGTTVQEKFGQQKRAETKLQVSFKSKIAEDLFKTRADLWFGYTQRSDWQIYNQGRKSAPFRNTDYKPEIFLTQPVKADLPFGGRLRMLGAGFVHQSNGQSRPESRSWNRIYAMAGMEWGKLTVIPRVWVRAFDQSGDKNDNPDIADYMGYGDVKLQYRLNDRQNVYSVLRYNPKTGYGAIEAAYTFPIKGKLKGVVRGFHGYGESLIDYNHKQNGIGIGLMFNDLDGI.

The first 27 residues, Met-1–Ala-27, serve as a signal peptide directing secretion. At Phe-28 to Gln-65 the chain is on the periplasmic side. The beta stranded transmembrane segment at Glu-66–Arg-78 threads the bilayer. The Extracellular segment spans residues Ser-79 to Arg-168. Residues Ala-169 to Glu-183 traverse the membrane as a beta stranded segment. Residues Asp-184–Arg-189 are Periplasmic-facing. A beta stranded membrane pass occupies residues Ala-190–Trp-202. Over Gln-203 to Pro-213 the chain is Extracellular. Ca(2+) is bound at residue Ser-211. A beta stranded membrane pass occupies residues Phe-214 to Leu-233. The Periplasmic portion of the chain corresponds to Pro-234–Gly-236. Residues Gly-237–Ser-250 traverse the membrane as a beta stranded segment. His-248 (proton acceptor) is an active-site residue. Ser-250 functions as the Nucleophile in the catalytic mechanism. Residues Asn-251–Arg-259 lie on the Extracellular side of the membrane. Ser-258 lines the Ca(2+) pocket. The beta stranded transmembrane segment at Ser-260 to Trp-272 threads the bilayer. Topologically, residues Gly-273–Lys-274 are periplasmic. A beta stranded transmembrane segment spans residues Leu-275–Arg-284. At Ala-285–Asp-306 the chain is on the extracellular side. Asp-294 is a Ca(2+) binding site. The beta stranded transmembrane segment at Val-307–Leu-313 threads the bilayer. The Periplasmic segment spans residues Asn-314–Asp-315. A beta stranded membrane pass occupies residues Arg-316 to Tyr-325. At Asn-326 to Gly-332 the chain is on the extracellular side. Residues Ala-333–Pro-341 form a beta stranded membrane-spanning segment. Residues Ile-342 to Leu-346 lie on the Periplasmic side of the membrane. The chain crosses the membrane as a beta stranded span at residues Lys-347–Tyr-356. At Gly-357–His-365 the chain is on the extracellular side. The chain crosses the membrane as a beta stranded span at residues Lys-366–Asn-377. Residues Asp-378–Ile-382 lie on the Periplasmic side of the membrane.

This sequence belongs to the phospholipase A1 family. As to quaternary structure, homodimer; dimerization is reversible, and the dimeric form is the active one. It depends on Ca(2+) as a cofactor.

The protein resides in the cell outer membrane. It carries out the reaction a 1,2-diacyl-sn-glycero-3-phosphocholine + H2O = a 2-acyl-sn-glycero-3-phosphocholine + a fatty acid + H(+). The enzyme catalyses a 1,2-diacyl-sn-glycero-3-phosphocholine + H2O = a 1-acyl-sn-glycero-3-phosphocholine + a fatty acid + H(+). In terms of biological role, hydrolysis of phosphatidylcholine with phospholipase A2 (EC 3.1.1.4) and phospholipase A1 (EC 3.1.1.32) activities. This chain is Putative phospholipase A1, found in Neisseria meningitidis serogroup B (strain ATCC BAA-335 / MC58).